The sequence spans 357 residues: Isopentenyl-diphosphate delta-isomerase (357 aa).

Substrate is bound at residue 13–14 (RK). FMN-binding positions include Ser71, 72-74 (SMT), Ser102, and Asn131. 102-104 (SMR) is a substrate binding site. Gln166 contacts substrate. Mg(2+) is bound at residue Glu167. FMN contacts are provided by residues Lys198 and 311–312 (AR).

Belongs to the IPP isomerase type 2 family. Homooctamer. Dimer of tetramers. FMN serves as cofactor. Requires NADPH as cofactor. It depends on Mg(2+) as a cofactor.

Its subcellular location is the cytoplasm. The catalysed reaction is isopentenyl diphosphate = dimethylallyl diphosphate. Functionally, involved in the biosynthesis of isoprenoids. Catalyzes the 1,3-allylic rearrangement of the homoallylic substrate isopentenyl (IPP) to its allylic isomer, dimethylallyl diphosphate (DMAPP). The sequence is that of Isopentenyl-diphosphate delta-isomerase from Chlorobium chlorochromatii (strain CaD3).